A 1339-amino-acid polypeptide reads, in one-letter code: DNA-directed RNA polymerase subunit beta'' (1339 aa).

Zn(2+) is bound by residues cysteine 226, cysteine 299, cysteine 306, and cysteine 309.

It belongs to the RNA polymerase beta' chain family. RpoC2 subfamily. In terms of assembly, in plastids the minimal PEP RNA polymerase catalytic core is composed of four subunits: alpha, beta, beta', and beta''. When a (nuclear-encoded) sigma factor is associated with the core the holoenzyme is formed, which can initiate transcription. It depends on Zn(2+) as a cofactor.

It is found in the plastid. Its subcellular location is the chloroplast. It carries out the reaction RNA(n) + a ribonucleoside 5'-triphosphate = RNA(n+1) + diphosphate. DNA-dependent RNA polymerase catalyzes the transcription of DNA into RNA using the four ribonucleoside triphosphates as substrates. The sequence is that of DNA-directed RNA polymerase subunit beta'' from Cycas taitungensis (Prince sago).